A 306-amino-acid chain; its full sequence is MTASLHIILDTDPGIDDAAAIAAALFAPQLDLQLITTVAGNVSVEKTTRNALQLLHFWDADVPLAQGAATPLLRPLRDAAYVHGESGMEGYDFVDHQRQPLAKPAFIAIRDVLMNAPEPMTLVAIGPLTNIALLLMHYPECACNIRRLVLMGGSAGRGNFTPNAEFNIAVDPEAAALVFRSGLEIVMCGLDVTNQAMLSPDFLNKLPALNRTGKMLHSLFNHYRSGSMRTGVRMHDLCAIAWLVRPELFTLQSCFVAVETQGEYTAGTTVVDIEGRLGQPANAQVALALDVDGFRQWVAEVFAYAP.

H235 is an active-site residue.

Belongs to the IUNH family. RihC subfamily.

Its function is as follows. Hydrolyzes both purine and pyrimidine ribonucleosides with a broad-substrate specificity. The sequence is that of Non-specific ribonucleoside hydrolase RihC from Salmonella enteritidis PT4 (strain P125109).